The primary structure comprises 589 residues: V-type ATP synthase alpha chain (589 aa).

232–239 contributes to the ATP binding site; that stretch reads GPFGSGKT.

It belongs to the ATPase alpha/beta chains family.

It carries out the reaction ATP + H2O + 4 H(+)(in) = ADP + phosphate + 5 H(+)(out). Its function is as follows. Produces ATP from ADP in the presence of a proton gradient across the membrane. The V-type alpha chain is a catalytic subunit. This chain is V-type ATP synthase alpha chain, found in Acetivibrio thermocellus (strain ATCC 27405 / DSM 1237 / JCM 9322 / NBRC 103400 / NCIMB 10682 / NRRL B-4536 / VPI 7372) (Clostridium thermocellum).